The following is a 35-amino-acid chain: U14-ctenitoxin-Pn1a (35 aa).

Cystine bridges form between Cys3-Cys17, Cys10-Cys22, and Cys16-Cys32.

Expressed by the venom gland.

The protein localises to the secreted. Functionally, neurotoxin. This Phoneutria nigriventer (Brazilian armed spider) protein is U14-ctenitoxin-Pn1a.